An 842-amino-acid polypeptide reads, in one-letter code: Alanine--tRNA ligase (842 aa).

Zn(2+)-binding residues include His-549, His-553, Cys-650, and His-654.

Belongs to the class-II aminoacyl-tRNA synthetase family. The cofactor is Zn(2+).

The protein resides in the cytoplasm. It carries out the reaction tRNA(Ala) + L-alanine + ATP = L-alanyl-tRNA(Ala) + AMP + diphosphate. Functionally, catalyzes the attachment of alanine to tRNA(Ala) in a two-step reaction: alanine is first activated by ATP to form Ala-AMP and then transferred to the acceptor end of tRNA(Ala). Also edits incorrectly charged Ser-tRNA(Ala) and Gly-tRNA(Ala) via its editing domain. In Campylobacter jejuni (strain RM1221), this protein is Alanine--tRNA ligase.